An 84-amino-acid chain; its full sequence is Small ribosomal subunit protein bS18 (84 aa).

This sequence belongs to the bacterial ribosomal protein bS18 family. In terms of assembly, part of the 30S ribosomal subunit. Forms a tight heterodimer with protein bS6.

Its function is as follows. Binds as a heterodimer with protein bS6 to the central domain of the 16S rRNA, where it helps stabilize the platform of the 30S subunit. The chain is Small ribosomal subunit protein bS18 from Mycobacterium sp. (strain JLS).